A 167-amino-acid chain; its full sequence is ATP synthase subunit b (167 aa).

The helical transmembrane segment at 7–25 (SFWLTISFVIFVYLIYRPA) threads the bilayer.

This sequence belongs to the ATPase B chain family. F-type ATPases have 2 components, F(1) - the catalytic core - and F(0) - the membrane proton channel. F(1) has five subunits: alpha(3), beta(3), gamma(1), delta(1), epsilon(1). F(0) has three main subunits: a(1), b(2) and c(10-14). The alpha and beta chains form an alternating ring which encloses part of the gamma chain. F(1) is attached to F(0) by a central stalk formed by the gamma and epsilon chains, while a peripheral stalk is formed by the delta and b chains.

It is found in the cell inner membrane. F(1)F(0) ATP synthase produces ATP from ADP in the presence of a proton or sodium gradient. F-type ATPases consist of two structural domains, F(1) containing the extramembraneous catalytic core and F(0) containing the membrane proton channel, linked together by a central stalk and a peripheral stalk. During catalysis, ATP synthesis in the catalytic domain of F(1) is coupled via a rotary mechanism of the central stalk subunits to proton translocation. In terms of biological role, component of the F(0) channel, it forms part of the peripheral stalk, linking F(1) to F(0). This Rickettsia prowazekii (strain Madrid E) protein is ATP synthase subunit b.